The following is a 355-amino-acid chain: Homeotic protein knotted-1 (355 aa).

Residues 205-233 (KCEGVGSSEEDQDNSGGETELPEIDPRAE) are disordered. One can recognise an ELK domain in the interval 236-256 (ELKNHLLRKYSGYLSSLKQEL). A DNA-binding region (homeobox; TALE-type) is located at residues 257 to 320 (SKKKKKGKLP…NQRKRHWKPS (64 aa)).

Belongs to the TALE/KNOX homeobox family. In terms of tissue distribution, expressed in the apical meristems, in the newly emerged lateral primordia in the floral bud, in their vascular bundles and in the cortex parenchyma of the floral pedicle. Also present in the lateral tips of leaf primordia.

The protein localises to the nucleus. In terms of biological role, appears to be involved in meristem formation and in the regulation of leaf morphology. Misexpression makes the leaf more compound which is always associated with growth retardation and loss of apical dominance, resulting in dwarfed, bushy plants. Probably binds to the DNA sequence 5'-TGAC-3'. The chain is Homeotic protein knotted-1 (KN1) from Solanum lycopersicum (Tomato).